Consider the following 2242-residue polypeptide: Multifunctional protein CAD (2242 aa).

The segment at 1 to 365 (MATLFLDDGS…CARDVKLGVN (365 aa)) is GATase (Glutamine amidotransferase). Residues Ser44, Gly222, and Gly224 each contribute to the L-glutamine site. A Glutamine amidotransferase type-1 domain is found at 177–363 (KIMAVDCGMK…LECARDVKLG (187 aa)). Cys252 serves as the catalytic Nucleophile; for GATase activity. Residues Leu253, Gln256, Asn294, Gly296, and Phe297 each contribute to the L-glutamine site. Catalysis depends on for GATase activity residues His336 and Glu338. A linker region spans residues 366 to 397 (LDKTVKGRVISHYSFKNGTENSKTPPGRIQPH). The CPSase A stretch occupies residues 398 to 937 (KVLILGSGGL…GEGHDLDFTK (540 aa)). The segment at 398 to 1462 (KVLILGSGGL…TPPVKTHIDS (1065 aa)) is CPSase (Carbamoyl-phosphate synthase). ATP contacts are provided by Arg518, Arg558, Gly564, Gly565, Lys595, Glu602, Gly628, Ile629, His630, Gln671, and Glu685. 2 ATP-grasp domains span residues 522 to 714 (VEKM…KLAL) and 1057 to 1248 (SRML…KVIM). Mg(2+)-binding residues include Gln671, Glu685, and Asn687. The Mn(2+) site is built by Gln671, Glu685, and Asn687. The CPSase B stretch occupies residues 938 to 1462 (PHVMVIGSGV…TPPVKTHIDS (525 aa)). ATP contacts are provided by Arg1093, Lys1132, Ile1134, Glu1139, Gly1164, Val1165, His1166, Ser1167, Gln1207, and Glu1219. 3 residues coordinate Mg(2+): Gln1207, Glu1219, and Asn1221. Positions 1207, 1219, and 1221 each coordinate Mn(2+). The MGS-like domain maps to 1313-1469 (FKIPKKNILL…IDSMSSHKLI (157 aa)). The tract at residues 1463 to 1796 (MSSHKLIRLP…KGRVRRVVLR (334 aa)) is DHOase (dihydroorotase). Zn(2+) contacts are provided by His1478 and His1480. The (S)-dihydroorotate site is built by Arg1482 and Asn1512. Residues Lys1563, His1597, Cys1620, His1621, and Glu1644 each contribute to the Zn(2+) site. Lys1563 is modified (N6-carboxylysine). (S)-dihydroorotate is bound at residue Arg1668. Position 1693 (Asp1693) interacts with Zn(2+). Asp1693 acts as the For DHOase activity in catalysis. 2 residues coordinate (S)-dihydroorotate: His1697 and Pro1709. The tract at residues 1797-1934 (GEVAYIDGQV…QAVPHPYSLL (138 aa)) is linker. Positions 1829–1862 (PTTVKTPEHSKPTQTETVRTRTASPRRLASSGPA) are disordered. Residues 1840 to 1851 (PTQTETVRTRTA) show a composition bias toward polar residues. An ATCase (Aspartate transcarbamylase) region spans residues 1935–2242 (LHPFVGQHIL…ALLATVLGKF (308 aa)). Carbamoyl phosphate-binding residues include Arg1992 and Thr1993. Lys2020 is a binding site for L-aspartate. Residues Arg2041, His2069, and Gln2072 each contribute to the carbamoyl phosphate site. L-aspartate is bound by residues Arg2102 and Arg2163. Leu2202 and Pro2203 together coordinate carbamoyl phosphate.

It in the N-terminal section; belongs to the CarA family. In the 2nd section; belongs to the CarB family. The protein in the 3rd section; belongs to the metallo-dependent hydrolases superfamily. DHOase family. CAD subfamily. This sequence in the C-terminal section; belongs to the aspartate/ornithine carbamoyltransferase superfamily. ATCase family. Homohexamer. It depends on Mg(2+) as a cofactor. Requires Mn(2+) as cofactor. Zn(2+) is required as a cofactor. Present in the testis but not in the liver.

The protein resides in the cytoplasm. Its subcellular location is the nucleus. The catalysed reaction is hydrogencarbonate + L-glutamine + 2 ATP + H2O = carbamoyl phosphate + L-glutamate + 2 ADP + phosphate + 2 H(+). It carries out the reaction L-glutamine + H2O = L-glutamate + NH4(+). It catalyses the reaction hydrogencarbonate + NH4(+) + 2 ATP = carbamoyl phosphate + 2 ADP + phosphate + 2 H(+). The enzyme catalyses carbamoyl phosphate + L-aspartate = N-carbamoyl-L-aspartate + phosphate + H(+). The catalysed reaction is (S)-dihydroorotate + H2O = N-carbamoyl-L-aspartate + H(+). It participates in pyrimidine metabolism; UMP biosynthesis via de novo pathway; (S)-dihydroorotate from bicarbonate: step 1/3. Its pathway is pyrimidine metabolism; UMP biosynthesis via de novo pathway; (S)-dihydroorotate from bicarbonate: step 2/3. The protein operates within pyrimidine metabolism; UMP biosynthesis via de novo pathway; (S)-dihydroorotate from bicarbonate: step 3/3. Allosterically regulated and controlled by phosphorylation. 5-phosphoribose 1-diphosphate is an activator while UMP is an inhibitor of the CPSase reaction. Multifunctional protein that encodes the first 3 enzymatic activities of the de novo pyrimidine pathway: carbamoylphosphate synthetase (CPSase; EC 6.3.5.5), aspartate transcarbamylase (ATCase; EC 2.1.3.2) and dihydroorotase (DHOase; EC 3.5.2.3). The CPSase-function is accomplished in 2 steps, by a glutamine-dependent amidotransferase activity (GATase) that binds and cleaves glutamine to produce ammonia, followed by an ammonium-dependent carbamoyl phosphate synthetase, which reacts with the ammonia, hydrogencarbonate and ATP to form carbamoyl phosphate. The endogenously produced carbamoyl phosphate is sequestered and channeled to the ATCase active site. ATCase then catalyzes the formation of carbamoyl-L-aspartate from L-aspartate and carbamoyl phosphate. In the last step, DHOase catalyzes the cyclization of carbamoyl aspartate to dihydroorotate. This Squalus acanthias (Spiny dogfish) protein is Multifunctional protein CAD (CAD).